A 614-amino-acid chain; its full sequence is MGLHAILLLLLLRISASAAASRPPLDTLGIPPQDEAYFRGGVIRCRDGSGRFARDKLNDDFCDCPDGTDEPGTSACPEGKFYCQNAGHSPITIFSSRVNDGICDCCDGSDEYDSNVTCKNTCWEAGKAARDKLKKKVATYKSGVVIRNQEIQKAKVAFAKDEAELAKLKGEEKILQGLVDKLTEQKKLIEKAEEEERLRKEKEEKRMKEEAEKQAADEKKASDASQEVDSQENHETVQEDESKVAEHHDGHATSHDNHTPESESSVEQHDPESQDDISIKAAPADESPPEETSAAPTKEQESTPADSEGLSREELGRLVASRWTGEKVDEVSKDDKNEHEAEHDMPEHSEETHEDESDVPESAEDSYAGYHSEVEDDRHKYDDEDFSHESDDEYVDDHDEHVASYKSDDDQKGDDHSDFTASGQASWLDKIQQTVQNVLRTFNFFKTPVDLSEASRVRKEYDDASSKLSKIQSRISTLTDKLKHDFGKEKEFYYFYDQCFESKEGKYVYKVCPFKKASQVEGHSTTSLGRWDKFEESYRVMQFSNGDRCWNGPDRSLKVRLRCGLNNELNGVDEPSRCEYVAVLSTPALCDEQKLKELEQKLKASSNQRDHDEL.

The signal sequence occupies residues 1-19 (MGLHAILLLLLLRISASAA). N-linked (GlcNAc...) asparagine glycosylation occurs at N115. Basic and acidic residues-rich tracts occupy residues 194 to 222 (EEER…KKAS), 231 to 272 (QENH…HDPE), and 324 to 351 (TGEK…HSEE). The tract at residues 194–396 (EEERLRKEKE…SHESDDEYVD (203 aa)) is disordered. Acidic residues predominate over residues 352 to 364 (THEDESDVPESAE). Positions 372 to 382 (SEVEDDRHKYD) are enriched in basic and acidic residues. Acidic residues predominate over residues 383 to 396 (DEDFSHESDDEYVD). One can recognise an MRH domain in the interval 497–592 (DQCFESKEGK…VLSTPALCDE (96 aa)). 3 cysteine pairs are disulfide-bonded: C499-C512, C549-C578, and C563-C590.

In terms of assembly, heterodimer of a catalytic alpha subunit and a beta subunit.

The protein localises to the endoplasmic reticulum. The protein operates within glycan metabolism; N-glycan metabolism. In terms of biological role, regulatory subunit of glucosidase II. May be required for defense response elicited by pathogen-associated molecular patterns (PAMPs). The sequence is that of Glucosidase 2 subunit beta from Oryza sativa subsp. japonica (Rice).